The chain runs to 1343 residues: DNA-directed RNA polymerase subunit beta (1343 aa).

The protein belongs to the RNA polymerase beta chain family. In terms of assembly, the RNAP catalytic core consists of 2 alpha, 1 beta, 1 beta' and 1 omega subunit. When a sigma factor is associated with the core the holoenzyme is formed, which can initiate transcription.

The catalysed reaction is RNA(n) + a ribonucleoside 5'-triphosphate = RNA(n+1) + diphosphate. In terms of biological role, DNA-dependent RNA polymerase catalyzes the transcription of DNA into RNA using the four ribonucleoside triphosphates as substrates. The polypeptide is DNA-directed RNA polymerase subunit beta (Shewanella denitrificans (strain OS217 / ATCC BAA-1090 / DSM 15013)).